The following is a 174-amino-acid chain: Adenylate kinase (174 aa).

Residues 12–41 form an NMP region; sequence STGDMLRAAIKAGTPLGLEAKKIIDEGGLV. AMP contacts are provided by residues T13, R18, 39-41, 67-70, and Q74; these read GLV and GFPR. Residues 104 to 141 form an LID region; that stretch reads GRRVHLASGRTYHVTYNPPKVEGKDDVTGEDLIQRDDD. ATP-binding positions include R105 and 114-115; that span reads TY. R138 and R149 together coordinate AMP.

This sequence belongs to the adenylate kinase family. As to quaternary structure, monomer.

It localises to the cytoplasm. It catalyses the reaction AMP + ATP = 2 ADP. The protein operates within purine metabolism; AMP biosynthesis via salvage pathway; AMP from ADP: step 1/1. Catalyzes the reversible transfer of the terminal phosphate group between ATP and AMP. Plays an important role in cellular energy homeostasis and in adenine nucleotide metabolism. The polypeptide is Adenylate kinase (Neisseria flavescens).